The chain runs to 297 residues: MDLRDLKTFLHLAESRHFGRSARAMHVSPSTLSRQIQRLEEDLGQPLFVRDNRTVTLTEAGEELRVFAQQTLLQYQQLRHTIDQQGPSLSGELHIFCSVTAAYSHLPPILDRFRAEHPSVEIKLTTGDAADAMEKVVTGEADLAIAGKPETLPGAVAFSMLENLAVVLIAPALPCPVRNQVSVEKPDWSTVPFIMADQGPVRRRIELWFRRNKISNPMIYATVGGHEAMVSMVALGCGVALLPEVVLENSPEPVRNRVMILERSDEKTPFELGVCAQKKRLHEPLIEAFWKILPNHK.

Residues 1–58 (MDLRDLKTFLHLAESRHFGRSARAMHVSPSTLSRQIQRLEEDLGQPLFVRDNRTVTLT) form the HTH lysR-type domain. Positions 18-37 (FGRSARAMHVSPSTLSRQIQ) form a DNA-binding region, H-T-H motif.

Belongs to the LysR transcriptional regulatory family.

It is found in the cytoplasm. Functionally, this protein activates the transcription of the ilvC gene in the presence of acetolactate or acetohydroxybutyrate. IlvY is also a negative regulator of its own expression. This Escherichia coli (strain K12) protein is HTH-type transcriptional regulator IlvY (ilvY).